The chain runs to 208 residues: Urease accessory protein UreG (208 aa).

12-19 is a binding site for GTP; it reads GPVGAGKT.

The protein belongs to the SIMIBI class G3E GTPase family. UreG subfamily. As to quaternary structure, homodimer. UreD, UreF and UreG form a complex that acts as a GTP-hydrolysis-dependent molecular chaperone, activating the urease apoprotein by helping to assemble the nickel containing metallocenter of UreC. The UreE protein probably delivers the nickel.

It localises to the cytoplasm. In terms of biological role, facilitates the functional incorporation of the urease nickel metallocenter. This process requires GTP hydrolysis, probably effectuated by UreG. This is Urease accessory protein UreG from Rhodobacter capsulatus (Rhodopseudomonas capsulata).